Here is a 246-residue protein sequence, read N- to C-terminus: AA9 family lytic polysaccharide monooxygenase D (246 aa).

An N-terminal signal peptide occupies residues 1–19; sequence MHLLSLLFPVIALIPTVLS. His-20 contributes to the Cu(2+) binding site. Cys-78 and Cys-196 are oxidised to a cystine. 3 N-linked (GlcNAc...) asparagine glycosylation sites follow: Asn-86, Asn-141, and Asn-156. The O2 site is built by His-182 and Gln-191. Tyr-193 serves as a coordination point for Cu(2+). Residue Asn-235 is glycosylated (N-linked (GlcNAc...) asparagine).

Belongs to the polysaccharide monooxygenase AA9 family. Cu(2+) is required as a cofactor.

It localises to the secreted. It catalyses the reaction [(1-&gt;4)-beta-D-glucosyl]n+m + reduced acceptor + O2 = 4-dehydro-beta-D-glucosyl-[(1-&gt;4)-beta-D-glucosyl]n-1 + [(1-&gt;4)-beta-D-glucosyl]m + acceptor + H2O.. In terms of biological role, lytic polysaccharide monooxygenase (LPMO) that depolymerizes crystalline and amorphous polysaccharides via the oxidation of scissile alpha- or beta-(1-4)-glycosidic bonds, yielding C1 and C4 oxidation products. Catalysis by LPMOs requires the reduction of the active-site copper from Cu(II) to Cu(I) by a reducing agent and H(2)O(2) or O(2) as a cosubstrate. In Botryotinia fuckeliana (strain B05.10) (Noble rot fungus), this protein is AA9 family lytic polysaccharide monooxygenase D.